A 254-amino-acid chain; its full sequence is Major prion protein (254 aa).

The first 22 residues, 1–22 (MANLGYWLLALFVTMWTDVGLC), serve as a signal peptide directing secretion. Residues 23 to 38 (KKRPKPGGWNTGGSRY) form an interaction with ADGRG6 region. An interaction with GRB2, ERI3 and SYN1 region spans residues 23-231 (KKRPKPGGWN…QAYYDGRRSS (209 aa)). Residues 25–104 (RPKPGGWNTG…HNQWNKPSKP (80 aa)) form a disordered region. P44 carries the post-translational modification Hydroxyproline. Repeat copies occupy residues 51-58 (PQGGTWGQ), 59-66 (PHGGGWGQ), 67-74 (PHGGSWGQ), 75-82 (PHGGSWGQ), and 83-90 (PHGGGWGQ). The tract at residues 51–90 (PQGGTWGQPHGGGWGQPHGGSWGQPHGGSWGQPHGGGWGQ) is 5 X 8 AA tandem repeats of P-H-G-G-G-W-G-Q. A compositionally biased stretch (gly residues) spans 54–94 (GTWGQPHGGGWGQPHGGSWGQPHGGSWGQPHGGGWGQGGGT). H60, G61, G62, H68, G69, G70, H76, G77, G78, H84, G85, and G86 together coordinate Cu(2+). C178 and C213 are joined by a disulfide. N-linked (GlcNAc...) asparagine glycans are attached at residues N180 and N196. S230 is lipidated: GPI-anchor amidated serine. Residues 231–254 (SSTVLFSSPPVILLISFLIFLIVG) constitute a propeptide, removed in mature form.

This sequence belongs to the prion family. As to quaternary structure, monomer and homodimer. Has a tendency to aggregate into amyloid fibrils containing a cross-beta spine, formed by a steric zipper of superposed beta-strands. Soluble oligomers may represent an intermediate stage on the path to fibril formation. Copper binding may promote oligomerization. Interacts with GRB2, APP, ERI3/PRNPIP and SYN1. Mislocalized cytosolically exposed PrP interacts with MGRN1; this interaction alters MGRN1 subcellular location and causes lysosomal enlargement. Interacts with APP. Interacts with KIAA1191. Interacts with ADGRG6. N-glycosylated. In terms of tissue distribution, highly expressed in the brain, lung, kidney and heart. Expressed at low levels in the liver and spleen.

The protein resides in the cell membrane. Its subcellular location is the golgi apparatus. Its primary physiological function is unclear. May play a role in neuronal development and synaptic plasticity. May be required for neuronal myelin sheath maintenance. May promote myelin homeostasis through acting as an agonist for ADGRG6 receptor. May play a role in iron uptake and iron homeostasis. Soluble oligomers are toxic to cultured neuroblastoma cells and induce apoptosis (in vitro). Association with GPC1 (via its heparan sulfate chains) targets PRNP to lipid rafts. Also provides Cu(2+) or Zn(2+) for the ascorbate-mediated GPC1 deaminase degradation of its heparan sulfate side chains. This Mus musculus (Mouse) protein is Major prion protein (Prnp).